Here is a 352-residue protein sequence, read N- to C-terminus: tRNA pseudouridine synthase D (352 aa).

Catalysis depends on Asp-81, which acts as the Nucleophile. Residues 157-303 form the TRUD domain; the sequence is GVPNYFGAQR…MDHERRILRL (147 aa).

Belongs to the pseudouridine synthase TruD family.

It catalyses the reaction uridine(13) in tRNA = pseudouridine(13) in tRNA. In terms of biological role, responsible for synthesis of pseudouridine from uracil-13 in transfer RNAs. In Pseudomonas entomophila (strain L48), this protein is tRNA pseudouridine synthase D.